The following is a 681-amino-acid chain: NADH-quinone oxidoreductase subunit G (681 aa).

Residues 1–78 (MIKLTIDGQE…GMVIHTDTPM (78 aa)) enclose the 2Fe-2S ferredoxin-type domain. [2Fe-2S] cluster is bound by residues Cys-34, Cys-45, Cys-48, and Cys-62. Residues 78-117 (MVKKAREGVMEFLLVNHPLDCPICDQGGECDLQDQAFRYG) enclose the 4Fe-4S His(Cys)3-ligated-type domain. The [4Fe-4S] cluster site is built by His-94, Cys-98, Cys-101, Cys-107, Cys-146, Cys-149, Cys-152, and Cys-196. The 4Fe-4S Mo/W bis-MGD-type domain occupies 215–271 (LRHTASIGVHDAEGSNIRIDSRGDEVMRVLPRVNEEINEEWLSDKNRFSYDGLKYQR).

Belongs to the complex I 75 kDa subunit family. Requires [2Fe-2S] cluster as cofactor. [4Fe-4S] cluster serves as cofactor.

The catalysed reaction is a quinone + NADH + 5 H(+)(in) = a quinol + NAD(+) + 4 H(+)(out). Functionally, NDH-1 shuttles electrons from NADH, via FMN and iron-sulfur (Fe-S) centers, to quinones in the respiratory chain. Couples the redox reaction to proton translocation (for every two electrons transferred, four hydrogen ions are translocated across the cytoplasmic membrane), and thus conserves the redox energy in a proton gradient. The sequence is that of NADH-quinone oxidoreductase subunit G (nuoG) from Rickettsia bellii (strain RML369-C).